The primary structure comprises 546 residues: MGCVKSKEDKGPTQKYRPDPTNPTPGSHMGLYGPDPTQMGQSPALKGPTNNYNSRSSGLTPFGGSSSVITPFGGASSSFSTVAVNNPFPGVVTGGVTFFVALYDYEARTSDDLSFSKGDRFQIINNTEGDWWEARSINTGQKGYIPSNYVAPADSIQAEEWYFGKMGRKDAERLLLLPGNQRGTFLVRESETTKGAYSLSIRDWDEMKGDNVKHYKIRKLDSGGYYITTRAQFDTLQKLVKHYTEHADGLCYRLTTVCPTVKPQTQGLAKDAWEIPRESLRLELKLGQGCFGEVWMGTWNGTTKVAIKTLKPGTMSPEAFLQEAQIMKKLRHDKLVPLYAVVSEEPIYIVTEYMGKGSLLDFLKEGEGKYLKLPQLVDMAAQIADGMAFIERMNYIHRDLRAANILVGDNLVCKIADFGLARLIEDNEYTARQGAKFPIKWTAPEAALYGRFTIKSDVWSFGILLTELVTKGRVPYPGMVNREVLEQVERGYRMPCPQGCPESLHEMMRLCWKKEPDERPTFEYIQSFLEDYFTATEPQYQPGDNL.

The span at 1 to 18 (MGCVKSKEDKGPTQKYRP) shows a compositional bias: basic and acidic residues. The interval 1 to 58 (MGCVKSKEDKGPTQKYRPDPTNPTPGSHMGLYGPDPTQMGQSPALKGPTNNYNSRSSG) is disordered. Residue G2 is the site of N-myristoyl glycine attachment. A lipid anchor (S-palmitoyl cysteine; in membrane form) is attached at C3. Polar residues predominate over residues 48-58 (PTNNYNSRSSG). Residues 94–155 (GGVTFFVALY…PSNYVAPADS (62 aa)) form the SH3 domain. In terms of domain architecture, SH2 spans 161 to 258 (WYFGKMGRKD…GLCYRLTTVC (98 aa)). The region spanning 280-533 (LRLELKLGQG…YIQSFLEDYF (254 aa)) is the Protein kinase domain. Residues 286 to 294 (LGQGCFGEV) and K308 each bind ATP. Catalysis depends on D399, which acts as the Proton acceptor. Y429 carries the phosphotyrosine; by autocatalysis modification. Y540 is subject to Phosphotyrosine; by CSK.

Belongs to the protein kinase superfamily. Tyr protein kinase family. SRC subfamily. Autophosphorylation at Tyr-429 maintains enzyme activity. Post-translationally, palmitoylation at Cys-3 promotes membrane localization. Widely expressed.

The protein resides in the cell membrane. It is found in the cytoplasm. Its subcellular location is the cytoskeleton. It localises to the microtubule organizing center. The protein localises to the centrosome. The protein resides in the cytosol. It is found in the cell junction. It catalyses the reaction L-tyrosyl-[protein] + ATP = O-phospho-L-tyrosyl-[protein] + ADP + H(+). Non-receptor protein tyrosine kinase that is involved in the regulation of cell growth and survival, apoptosis, cell-cell adhesion, cytoskeleton remodeling, differentiation, G2/M progression and cytokinesis. Required for convergent extension cell movements during gastrulation, acting with fyna via rhoa. May be required for epiboly to occur, possibly through its effects in calcium signaling. During embryonic development, phosphorylates ptk2.1/fak. This Danio rerio (Zebrafish) protein is Tyrosine-protein kinase yes (yes1).